The following is a 472-amino-acid chain: ATP-dependent rRNA helicase rrp3 (472 aa).

The disordered stretch occupies residues 1-51 (MPDVKKRKIAHEAPEHGSDAESTSSHESVAQQDDTAETQDEAAATETRPAP). The span at 10-19 (AHEAPEHGSD) shows a compositional bias: basic and acidic residues. Residues 20–29 (AESTSSHESV) are compositionally biased toward polar residues. A Q motif motif is present at residues 52–80 (KSFKDLGIIDQLCEACETMGYKAPTPIQA). The region spanning 83 to 254 (IPLALQGRDL…RASLSNPLRV (172 aa)) is the Helicase ATP-binding domain. 96-103 (AETGSGKT) is a binding site for ATP. The DEAD box signature appears at 202-205 (DEAD). The 145-residue stretch at 282–426 (YLVYLLNEFV…EYELEKDEVM (145 aa)) folds into the Helicase C-terminal domain. The disordered stretch occupies residues 451-472 (GTKAKKFGKGKRSRDEMDQEEG). Residues 452 to 462 (TKAKKFGKGKR) are compositionally biased toward basic residues.

The protein belongs to the DEAD box helicase family. DDX47/RRP3 subfamily. In terms of assembly, interacts with the SSU processome.

Its subcellular location is the nucleus. The catalysed reaction is ATP + H2O = ADP + phosphate + H(+). Its function is as follows. ATP-dependent rRNA helicase required for pre-ribosomal RNA processing. Involved in the maturation of the 35S-pre-rRNA and to its cleavage to mature 18S rRNA. This chain is ATP-dependent rRNA helicase rrp3, found in Neosartorya fischeri (strain ATCC 1020 / DSM 3700 / CBS 544.65 / FGSC A1164 / JCM 1740 / NRRL 181 / WB 181) (Aspergillus fischerianus).